Here is a 368-residue protein sequence, read N- to C-terminus: Probable endopolygalacturonase I (368 aa).

A signal peptide spans methionine 1 to alanine 18. Positions alanine 19 to lysine 31 are excised as a propeptide. A disulfide bridge connects residues cysteine 35 and cysteine 50. PbH1 repeat units follow at residues valine 140–glutamine 161, alanine 162–glutamate 192, and serine 193–serine 214. The Proton donor role is filled by aspartate 207. Cysteine 209 and cysteine 225 are oxidised to a cystine. The active site involves histidine 229. PbH1 repeat units follow at residues valine 244–threonine 265, valine 273–glutamine 295, and serine 307–glycine 352. Asparagine 246 carries N-linked (GlcNAc...) asparagine glycosylation. 2 cysteine pairs are disulfide-bonded: cysteine 335/cysteine 340 and cysteine 359/cysteine 368.

It belongs to the glycosyl hydrolase 28 family.

It localises to the secreted. The enzyme catalyses (1,4-alpha-D-galacturonosyl)n+m + H2O = (1,4-alpha-D-galacturonosyl)n + (1,4-alpha-D-galacturonosyl)m.. Functionally, involved in maceration and soft-rotting of plant tissue. Hydrolyzes the 1,4-alpha glycosidic bonds of de-esterified pectate in the smooth region of the plant cell wall. The chain is Probable endopolygalacturonase I (pgaI) from Aspergillus niger (strain ATCC MYA-4892 / CBS 513.88 / FGSC A1513).